A 221-amino-acid polypeptide reads, in one-letter code: Abscisic acid receptor PYL1 (221 aa).

Residues 1-11 are compositionally biased toward low complexity; the sequence is MANSESSSSPV. A disordered region spans residues 1-22; it reads MANSESSSSPVNEEENSQRIST. Residue Ala-2 is modified to N-acetylalanine. The START-like stretch occupies residues 50–206; the sequence is YQLGNGRCSS…NLQKLASITE (157 aa). Abscisate contacts are provided by residues Lys-86, 116-121, 143-149, and Glu-171; these read ANTSRE and RLRNYKS. The short motif at 112–116 is the Gate loop element; sequence SGLPA. A Latch loop motif is present at residues 142 to 144; sequence HRL.

This sequence belongs to the PYR/PYL/RCAR abscisic acid intracellular receptor family. As to quaternary structure, homodimer. Binds ABA on one subunit only. Interacts with HAB1, ABI1 and ABI2, and possibly with other PP2Cs. Binds to CARs protein in an ABA-independent manner, both at the plasma membrane and in the nucleus. Interacts directly with CAR1 and CAR4.

The protein resides in the cytoplasm. The protein localises to the nucleus. Its subcellular location is the cell membrane. Functionally, receptor for abscisic acid (ABA) required for ABA-mediated responses such as stomatal closure and germination inhibition. Inhibits the activity of group-A protein phosphatases type 2C (PP2Cs) when activated by ABA. Can be activated by both (-)-ABA and (+)-ABA. The chain is Abscisic acid receptor PYL1 (PYL1) from Arabidopsis thaliana (Mouse-ear cress).